The sequence spans 458 residues: UDP-N-acetylmuramate--L-alanine ligase (458 aa).

Position 118-124 (118-124) interacts with ATP; that stretch reads GTHGKTT.

Belongs to the MurCDEF family.

The protein resides in the cytoplasm. The enzyme catalyses UDP-N-acetyl-alpha-D-muramate + L-alanine + ATP = UDP-N-acetyl-alpha-D-muramoyl-L-alanine + ADP + phosphate + H(+). It functions in the pathway cell wall biogenesis; peptidoglycan biosynthesis. In terms of biological role, cell wall formation. This chain is UDP-N-acetylmuramate--L-alanine ligase, found in Clostridium botulinum (strain Loch Maree / Type A3).